A 935-amino-acid chain; its full sequence is Progesterone receptor (935 aa).

Residues 1–49 (MTELKAKGXRAPHVAGSPSSPKVXSPLPCRQAAXPFPGSQTSDTLPEVS) are disordered. An AF3; mediates transcriptional activation region spans residues 1 to 164 (MTELKAKGXR…SATQRVLSRL (164 aa)). Residues 1-568 (MTELKAKGXR…YSFESLPQKI (568 aa)) are modulating, Pro-Rich. The span at 17–28 (SPSSPKVXSPLP) shows a compositional bias: low complexity. Serine 20 is modified (phosphoserine). Residues 55–59 (LDGLL) carry the LXXL motif 1 motif. The interval 61-255 (PRICQGQDPP…GAAAGGGAAA (195 aa)) is disordered. Serine 81 bears the Phosphoserine mark. Residues 115–119 (LDTLW) carry the LXXL motif 2 motif. Residues serine 130 and serine 162 each carry the phosphoserine modification. The interval 165-305 (MSRSGGKAGD…LATTVTDFIH (141 aa)) is mediates transcriptional transrepression. The Nuclear localization signal signature appears at 183 to 187 (KVLPR). A Phosphoserine modification is found at serine 190. The segment covering 191 to 203 (PSRQLLLPTTGSP) has biased composition (polar residues). Serine 213 bears the Phosphoserine mark. Acidic residues predominate over residues 220-231 (EVEEEDGSESED). Over residues 232–246 (SAGPLLKGKPRALGG) the composition is skewed to low complexity. Serine 294 bears the Phosphoserine; by MAPK1 mark. The tract at residues 331–365 (GGAGAASAFAPPRSSPSASSTPVPGGDFPDCAYAP) is disordered. Residues 335-356 (AASAFAPPRSSPSASSTPVPGG) show a composition bias toward low complexity. Serine 345 bears the Phosphoserine; by MAPK mark. Lysine 388 participates in a covalent cross-link: Glycyl lysine isopeptide (Lys-Gly) (interchain with G-Cter in SUMO); alternate. Lysine 388 is covalently cross-linked (Glycyl lysine isopeptide (Lys-Gly) (interchain with G-Cter in ubiquitin); alternate). Serine 400 bears the Phosphoserine; by CDK2 mark. Residues 415–452 (PDFPLGPPPPLPPRAPPSRPGEAAVTAAPASASVSSAS) form a disordered region. The span at 418–433 (PLGPPPPLPPRAPPSR) shows a compositional bias: pro residues. The segment covering 434–452 (PGEAAVTAAPASASVSSAS) has biased composition (low complexity). Residues 456-548 (STLECILYKA…VYPPYLNYLR (93 aa)) form an AF1; mediates transcriptional activation region. Lysine 533 participates in a covalent cross-link: Glycyl lysine isopeptide (Lys-Gly) (interchain with G-Cter in SUMO). NR C4-type zinc fingers lie at residues 569 to 589 (CLIC…CGSC) and 605 to 629 (CAGR…LRKC). Residues 569–641 (CLICGDEASG…AGMVLGGRKF (73 aa)) constitute a DNA-binding region (nuclear receptor). Residue serine 678 is modified to Phosphoserine. An NR LBD domain is found at 681 to 915 (QDIQLIPPLI…EFPEMMSEVI (235 aa)). The segment at 689 to 935 (LINLLLSIEP…MVKPLLFHKK (247 aa)) is AF2; mediates transcriptional activation.

This sequence belongs to the nuclear hormone receptor family. Interacts with SMARD1 and UNC45A. Interacts with CUEDC2; the interaction promotes ubiquitination, decreases sumoylation, and represses transcriptional activity. Interacts with PIAS3; the interaction promotes sumoylation of PR in a hormone-dependent manner, inhibits DNA-binding, and alters nuclear export. Interacts with SP1; the interaction requires ligand-induced phosphorylation on Ser-345 by ERK1/2-MAPK. Interacts with PRMT2. Interacts with NCOA2 and NCOA1. Interacts with KLF9. Interacts with GTF2B. Phosphorylated on multiple serine sites. Several of these sites are hormone-dependent. Phosphorylation on Ser-294 is highly hormone-dependent and modulates ubiquitination and sumoylation on Lys-388. Phosphorylation on Ser-345 also requires induction by hormone. Basal phosphorylation on Ser-81, Ser-162, Ser-190 and Ser-400 is increased in response to progesterone and can be phosphorylated in vitro by the CDK2-A1 complex. Increased levels of phosphorylation on Ser-400 also in the presence of EGF, heregulin, IGF, PMA and FBS. Phosphorylation at this site by CDK2 is ligand-independent, and increases nuclear translocation and transcriptional activity. Phosphorylation at Ser-162 and Ser-294, but not at Ser-190, is impaired during the G(2)/M phase of the cell cycle. Phosphorylation on Ser-345 by ERK1/2 MAPK is required for interaction with SP1. In terms of processing, sumoylation is hormone-dependent and represses transcriptional activity. Sumoylation on all three sites is enhanced by PIAS3. Desumoylated by SENP1. Sumoylation on Lys-388, the main site of sumoylation, is repressed by ubiquitination on the same site, and modulated by phosphorylation at Ser-294. Post-translationally, ubiquitination is hormone-dependent and represses sumoylation on the same site. Promoted by MAPK-mediated phosphorylation on Ser-294. Palmitoylated by ZDHHC7 and ZDHHC21. Palmitoylation is required for plasma membrane targeting and for rapid intracellular signaling via ERK and AKT kinases and cAMP generation.

Its subcellular location is the nucleus. The protein localises to the cytoplasm. Its function is as follows. The steroid hormones and their receptors are involved in the regulation of eukaryotic gene expression and affect cellular proliferation and differentiation in target tissues. Transcriptional activator of several progesteron-dependent promoters in a variety of cell types. Involved in activation of SRC-dependent MAPK signaling on hormone stimulation. The protein is Progesterone receptor (PGR) of Ateles paniscus (Black spider monkey).